We begin with the raw amino-acid sequence, 303 residues long: MNFQELILRLHNFWGQQGCIIQQPYDVEKGAGTMNPATFLRALGPEPWKVAYVEPSRRPTDGRYGENPNRLQHYYQYQVILKPSPDNVIDLYLASLRDLGIEPEKHDIRLVEDNWESPTLGAWGLGWEIWLDGMEITQFTYFQQCGGFDCLPVSAEITYGIERIAMYIQNKESVFDIEWVDGISYADVHHQAEVDYSHYNFEAADVGALTSMFNICEEEAIRVAERQLVQPAYDYVLKCSHLFNLLDARGAISVTERTAYIGRVRNLARMVAREYLEQRKRLNYPLLKDEKLRKQLIIEEEVL.

Belongs to the class-II aminoacyl-tRNA synthetase family. In terms of assembly, tetramer of two alpha and two beta subunits.

The protein localises to the cytoplasm. It carries out the reaction tRNA(Gly) + glycine + ATP = glycyl-tRNA(Gly) + AMP + diphosphate. This is Glycine--tRNA ligase alpha subunit from Syntrophomonas wolfei subsp. wolfei (strain DSM 2245B / Goettingen).